We begin with the raw amino-acid sequence, 94 residues long: Non-specific lipid-transfer protein 1 (94 aa).

Intrachain disulfides connect Cys-4–Cys-53, Cys-14–Cys-30, Cys-31–Cys-76, and Cys-51–Cys-90.

Its function is as follows. Plant non-specific lipid-transfer proteins transfer phospholipids as well as galactolipids across membranes. May play a role in wax or cutin deposition in the cell walls of expanding epidermal cells and certain secretory tissues. This chain is Non-specific lipid-transfer protein 1, found in Amaranthus hypochondriacus (Prince-of-Wales feather).